The primary structure comprises 72 residues: UPF0426 protein asl4034 (72 aa).

The protein belongs to the UPF0426 family.

This is UPF0426 protein asl4034 from Nostoc sp. (strain PCC 7120 / SAG 25.82 / UTEX 2576).